A 145-amino-acid polypeptide reads, in one-letter code: Large-conductance mechanosensitive channel (145 aa).

Transmembrane regions (helical) follow at residues 14–34 (VMDL…VKSL), 38–58 (LIMP…YFLP), and 81–101 (GSFL…FLMV).

Belongs to the MscL family. As to quaternary structure, homopentamer.

Its subcellular location is the cell inner membrane. Channel that opens in response to stretch forces in the membrane lipid bilayer. May participate in the regulation of osmotic pressure changes within the cell. In Rhizobium johnstonii (strain DSM 114642 / LMG 32736 / 3841) (Rhizobium leguminosarum bv. viciae), this protein is Large-conductance mechanosensitive channel.